We begin with the raw amino-acid sequence, 341 residues long: Krueppel-like factor 17 (341 aa).

The interval 214 to 252 (VTESNTQEEPFVREPPTPAPEGAESPSTSRGATRRQSPV) is disordered. Positions 238 to 252 (SPSTSRGATRRQSPV) are enriched in polar residues. C2H2-type zinc fingers lie at residues 256–280 (YVCTYNSCGKSYTKRSHLVSHQRKH), 286–310 (FACDWNGCTWKFFRSDELGRHKRIH), and 316–338 (HKCDECDREFMRSDHLRQHKRTH).

Belongs to the Sp1 C2H2-type zinc-finger protein family. Exclusively expressed in testis and ovary. Localized to step 3-8 spermatids in testis and growing oocytes in ovary.

The protein resides in the nucleus. Its function is as follows. Transcription repressor that binds to the promoter of target genes and prevents their expression. Acts as a negative regulator of epithelial-mesenchymal transition and metastasis in breast cancer. Specifically binds the 5'-CACCC-3' sequence in the promoter of ID1, a key metastasis regulator in breast cancer, and repress its expression. May be a germ cell-specific transcription factor that plays important roles in spermatid differentiation and oocyte development. The sequence is that of Krueppel-like factor 17 (Klf17) from Mus musculus (Mouse).